We begin with the raw amino-acid sequence, 123 residues long: Large ribosomal subunit protein eL8 (123 aa).

It belongs to the eukaryotic ribosomal protein eL8 family. Part of the 50S ribosomal subunit. Probably part of the RNase P complex.

Its subcellular location is the cytoplasm. Multifunctional RNA-binding protein that recognizes the K-turn motif in ribosomal RNA, the RNA component of RNase P, box H/ACA, box C/D and box C'/D' sRNAs. This is Large ribosomal subunit protein eL8 from Thermococcus gammatolerans (strain DSM 15229 / JCM 11827 / EJ3).